We begin with the raw amino-acid sequence, 342 residues long: uncharacterized protein (342 aa).

The protein belongs to the bacterial luciferase oxidoreductase family.

This is an uncharacterized protein from Sinorhizobium fredii (strain NBRC 101917 / NGR234).